We begin with the raw amino-acid sequence, 300 residues long: Enoyl-CoA hydratase domain-containing protein 3, mitochondrial (300 aa).

The transit peptide at 1-66 (MALVAGLRAF…RNIVLSNPRR (66 aa)) directs the protein to the mitochondrion. The segment at 32 to 54 (SPGSARPAGPESEPRLTSTRQQD) is disordered. Residue lysine 110 is modified to N6-succinyllysine.

Belongs to the enoyl-CoA hydratase/isomerase family.

Its subcellular location is the mitochondrion. In terms of biological role, may play a role in fatty acid biosynthesis and insulin sensitivity. This Rattus norvegicus (Rat) protein is Enoyl-CoA hydratase domain-containing protein 3, mitochondrial.